The sequence spans 100 residues: NADH-quinone oxidoreductase subunit K (100 aa).

A run of 3 helical transmembrane segments spans residues 4 to 24 (LNYG…SLLI), 29 to 49 (IFIL…FILI), and 60 to 80 (VLYI…LAIF).

This sequence belongs to the complex I subunit 4L family. As to quaternary structure, NDH-1 is composed of 13 different subunits. Subunits NuoA, H, J, K, L, M, N constitute the membrane sector of the complex.

Its subcellular location is the cell membrane. It catalyses the reaction a quinone + NADH + 5 H(+)(in) = a quinol + NAD(+) + 4 H(+)(out). In terms of biological role, NDH-1 shuttles electrons from NADH, via FMN and iron-sulfur (Fe-S) centers, to quinones in the respiratory chain. The immediate electron acceptor for the enzyme in this species is believed to be ubiquinone. Couples the redox reaction to proton translocation (for every two electrons transferred, four hydrogen ions are translocated across the cytoplasmic membrane), and thus conserves the redox energy in a proton gradient. This Buchnera aphidicola subsp. Cinara cedri (strain Cc) protein is NADH-quinone oxidoreductase subunit K.